The following is a 202-amino-acid chain: Tetranectin (202 aa).

Positions 1–21 (MELWGPCVLLCLFSLLTQVTA) are cleaved as a signal peptide. Intrachain disulfides connect cysteine 71–cysteine 81, cysteine 98–cysteine 197, and cysteine 173–cysteine 189. The 122-residue stretch at 77-198 (VHMKCFLAFV…CRDKLPYVCQ (122 aa)) folds into the C-type lectin domain.

As to quaternary structure, homotrimer.

It is found in the secreted. Functionally, tetranectin binds to plasminogen and to isolated kringle 4. May be involved in the packaging of molecules destined for exocytosis. Plays a role in retinal function. The polypeptide is Tetranectin (CLEC3B) (Bos taurus (Bovine)).